Here is a 1205-residue protein sequence, read N- to C-terminus: PAN2-PAN3 deadenylation complex catalytic subunit Pan2 (1205 aa).

WD repeat units lie at residues 153–193 (DESE…QKYA), 195–231 (ETPGVTIMRQTNRFFFCGHTSGKVSLRDLRSFKVEHE), 244–280 (VHGNLLAACGFSSRLTGLACDRFLKVYDLRMMRAITP), and 328–367 (PVGPLLMTFDVSASKQALAFGDSEGCVHLWTDSPEPSFNP). Residues 368-484 (YSRETEFALP…PTGREEEPLH (117 aa)) form a linker region. One can recognise a USP domain in the interval 485 to 924 (TVSKKYRKVT…VPAILYYVKR (440 aa)). S784 is modified (phosphoserine). Residues 975–1147 (VGLDAEFVTL…EDARTALQLY (173 aa)) enclose the Exonuclease domain. 4 residues coordinate a divalent metal cation: D978, E980, D1087, and D1139. The tract at residues 1179–1205 (WKVPEPESQSSPKSKAGLRPGALGWVG) is disordered. Positions 1184 to 1193 (PESQSSPKSK) are enriched in low complexity. S1189 bears the Phosphoserine mark.

It belongs to the peptidase C19 family. PAN2 subfamily. As to quaternary structure, forms a heterotrimer with an asymmetric homodimer of the regulatory subunit PAN3 to form the poly(A)-nuclease (PAN) deadenylation complex. Interacts with PAN3 isoform 1/Pan3L and isoform 3/Pan3S. Interacts with ZFP36. Requires a divalent metal cation as cofactor.

The protein localises to the cytoplasm. It localises to the P-body. It is found in the nucleus. The enzyme catalyses Exonucleolytic cleavage of poly(A) to 5'-AMP.. Its activity is regulated as follows. Positively regulated by the regulatory subunit PAN3. Functionally, catalytic subunit of the poly(A)-nuclease (PAN) deadenylation complex, one of two cytoplasmic mRNA deadenylases involved in general and miRNA-mediated mRNA turnover. PAN specifically shortens poly(A) tails of RNA and the activity is stimulated by poly(A)-binding protein (PABP). PAN deadenylation is followed by rapid degradation of the shortened mRNA tails by the CCR4-NOT complex. Deadenylated mRNAs are then degraded by two alternative mechanisms, namely exosome-mediated 3'-5' exonucleolytic degradation, or deadenylation-dependent mRNA decaping and subsequent 5'-3' exonucleolytic degradation by XRN1. Also acts as an important regulator of the HIF1A-mediated hypoxic response. Required for HIF1A mRNA stability independent of poly(A) tail length regulation. This is PAN2-PAN3 deadenylation complex catalytic subunit Pan2 from Rattus norvegicus (Rat).